The sequence spans 192 residues: uncharacterized protein (192 aa).

A Nudix hydrolase domain is found at 29-160 (QRQAAVLVPI…PLDIHRRGND (132 aa)). The Nudix box signature appears at 67-89 (GAVDNTDATLIAAALREAQEEVA). Mg(2+) is bound by residues E83 and E87.

It belongs to the Nudix hydrolase family. PCD1 subfamily. It depends on Mn(2+) as a cofactor. Mg(2+) serves as cofactor.

Probably mediates the hydrolysis of some nucleoside diphosphate derivatives. This is an uncharacterized protein from Klebsiella pneumoniae (strain 342).